Here is a 327-residue protein sequence, read N- to C-terminus: Serine/threonine-protein phosphatase alpha-1 isoform (327 aa).

Residues Asp-62, His-64, Asp-90, and Asn-122 each coordinate Mn(2+). His-123 acts as the Proton donor in catalysis. The Mn(2+) site is built by His-171 and His-246. The segment at 308-327 (GSSGRPLTPPRGANNKNKKK) is disordered. Phosphothreonine is present on Thr-315.

Belongs to the PPP phosphatase family. PP-1 subfamily. In terms of assembly, interacts with Nop17l. It depends on Mn(2+) as a cofactor.

The enzyme catalyses O-phospho-L-seryl-[protein] + H2O = L-seryl-[protein] + phosphate. It catalyses the reaction O-phospho-L-threonyl-[protein] + H2O = L-threonyl-[protein] + phosphate. The sequence is that of Serine/threonine-protein phosphatase alpha-1 isoform (Pp1alpha-96A) from Drosophila melanogaster (Fruit fly).